The sequence spans 330 residues: Aspartate--ammonia ligase (330 aa).

This sequence belongs to the class-II aminoacyl-tRNA synthetase family. AsnA subfamily.

It localises to the cytoplasm. The enzyme catalyses L-aspartate + NH4(+) + ATP = L-asparagine + AMP + diphosphate + H(+). Its pathway is amino-acid biosynthesis; L-asparagine biosynthesis; L-asparagine from L-aspartate (ammonia route): step 1/1. This is Aspartate--ammonia ligase from Haemophilus influenzae (strain PittGG).